We begin with the raw amino-acid sequence, 101 residues long: Small ribosomal subunit protein uS14 (101 aa).

The tract at residues 1–23 (MAKKSSVEKNKRRRKMVAQQAPK) is disordered.

It belongs to the universal ribosomal protein uS14 family. As to quaternary structure, part of the 30S ribosomal subunit. Contacts proteins S3 and S10.

Its function is as follows. Binds 16S rRNA, required for the assembly of 30S particles and may also be responsible for determining the conformation of the 16S rRNA at the A site. The chain is Small ribosomal subunit protein uS14 from Rhodospirillum centenum (strain ATCC 51521 / SW).